The sequence spans 325 residues: Inactive S-adenosylmethionine decarboxylase prozyme (325 aa).

The protein belongs to the eukaryotic AdoMetDC family. Forms a heterodimer with S-adenosylmethionine decarboxylase AdoMetDC; heterodimerization is required to activate AdoMetDC.

It functions in the pathway amine and polyamine biosynthesis; S-adenosylmethioninamine biosynthesis; S-adenosylmethioninamine from S-adenosyl-L-methionine: step 1/1. Probably has no catalytic activity due to the loss of several residues required for processing and catalysis. Forms a complex with S-adenosylmethionine decarboxylase AdoMetDC which is essential to activate AdoMetDC. Required for the biosynthesis of the polyamine spermidine. Required for growth and survival during the bloodstream life cycle stage. In Trypanosoma brucei brucei, this protein is Inactive S-adenosylmethionine decarboxylase prozyme.